The primary structure comprises 668 residues: tRNA 5-methylaminomethyl-2-thiouridine biosynthesis bifunctional protein MnmC (668 aa).

The segment at methionine 1 to glutamate 245 is tRNA (mnm(5)s(2)U34)-methyltransferase. Positions isoleucine 270–glycine 668 are FAD-dependent cmnm(5)s(2)U34 oxidoreductase.

It in the N-terminal section; belongs to the methyltransferase superfamily. tRNA (mnm(5)s(2)U34)-methyltransferase family. This sequence in the C-terminal section; belongs to the DAO family. FAD is required as a cofactor.

The protein resides in the cytoplasm. The catalysed reaction is 5-aminomethyl-2-thiouridine(34) in tRNA + S-adenosyl-L-methionine = 5-methylaminomethyl-2-thiouridine(34) in tRNA + S-adenosyl-L-homocysteine + H(+). In terms of biological role, catalyzes the last two steps in the biosynthesis of 5-methylaminomethyl-2-thiouridine (mnm(5)s(2)U) at the wobble position (U34) in tRNA. Catalyzes the FAD-dependent demodification of cmnm(5)s(2)U34 to nm(5)s(2)U34, followed by the transfer of a methyl group from S-adenosyl-L-methionine to nm(5)s(2)U34, to form mnm(5)s(2)U34. This is tRNA 5-methylaminomethyl-2-thiouridine biosynthesis bifunctional protein MnmC from Escherichia coli O139:H28 (strain E24377A / ETEC).